A 218-amino-acid chain; its full sequence is 3,4-dihydroxy-2-butanone 4-phosphate synthase (218 aa).

D-ribulose 5-phosphate contacts are provided by residues 38–39 (RE), D43, 151–155 (RRGHT), and E175. E39 contacts Mg(2+). Residue H154 coordinates Mg(2+).

This sequence belongs to the DHBP synthase family. As to quaternary structure, homodimer. Requires Mg(2+) as cofactor. The cofactor is Mn(2+).

It catalyses the reaction D-ribulose 5-phosphate = (2S)-2-hydroxy-3-oxobutyl phosphate + formate + H(+). Its pathway is cofactor biosynthesis; riboflavin biosynthesis; 2-hydroxy-3-oxobutyl phosphate from D-ribulose 5-phosphate: step 1/1. Functionally, catalyzes the conversion of D-ribulose 5-phosphate to formate and 3,4-dihydroxy-2-butanone 4-phosphate. This is 3,4-dihydroxy-2-butanone 4-phosphate synthase from Vibrio cholerae serotype O1 (strain ATCC 39541 / Classical Ogawa 395 / O395).